We begin with the raw amino-acid sequence, 341 residues long: Phosphoribosylformylglycinamidine cyclo-ligase (341 aa).

It belongs to the AIR synthase family.

Its subcellular location is the cytoplasm. It carries out the reaction 2-formamido-N(1)-(5-O-phospho-beta-D-ribosyl)acetamidine + ATP = 5-amino-1-(5-phospho-beta-D-ribosyl)imidazole + ADP + phosphate + H(+). It functions in the pathway purine metabolism; IMP biosynthesis via de novo pathway; 5-amino-1-(5-phospho-D-ribosyl)imidazole from N(2)-formyl-N(1)-(5-phospho-D-ribosyl)glycinamide: step 2/2. This is Phosphoribosylformylglycinamidine cyclo-ligase from Picosynechococcus sp. (strain ATCC 27264 / PCC 7002 / PR-6) (Agmenellum quadruplicatum).